The chain runs to 975 residues: Glycine dehydrogenase (decarboxylating) (975 aa).

Lys723 bears the N6-(pyridoxal phosphate)lysine mark.

This sequence belongs to the GcvP family. In terms of assembly, the glycine cleavage system is composed of four proteins: P, T, L and H. The cofactor is pyridoxal 5'-phosphate.

The catalysed reaction is N(6)-[(R)-lipoyl]-L-lysyl-[glycine-cleavage complex H protein] + glycine + H(+) = N(6)-[(R)-S(8)-aminomethyldihydrolipoyl]-L-lysyl-[glycine-cleavage complex H protein] + CO2. Functionally, the glycine cleavage system catalyzes the degradation of glycine. The P protein binds the alpha-amino group of glycine through its pyridoxal phosphate cofactor; CO(2) is released and the remaining methylamine moiety is then transferred to the lipoamide cofactor of the H protein. The protein is Glycine dehydrogenase (decarboxylating) of Burkholderia ambifaria (strain ATCC BAA-244 / DSM 16087 / CCUG 44356 / LMG 19182 / AMMD) (Burkholderia cepacia (strain AMMD)).